Consider the following 316-residue polypeptide: MQILLANPRGFCAGVDRAISIVENALAIYGAPIYVRHEVVHNRYVVDSLRQRGAIFIEQISEVPDGAILIFSAHGVSQAVRNEAKSRDLTVFDATCPLVTKVHMEVARASRRGEEAILIGHAGHPEVEGTMGQYSNPEGGMYLVESPEDVWTLNVKNEGKLSFMTQTTLSVDDTSDVIDALRKRFPKIVGPRKDDICYATTNRQEAVRALAEQADVVLVVGSKNSSNSNRLAELAQRMGRTAFLIDDAADIQEAWVKEAACVGVTAGASAPDILVQNVIARLREFGGGEAVTLEGREENIVFEVPKELRVDVREVE.

A [4Fe-4S] cluster-binding site is contributed by Cys12. 2 residues coordinate (2E)-4-hydroxy-3-methylbut-2-enyl diphosphate: His41 and His74. Dimethylallyl diphosphate is bound by residues His41 and His74. His41 and His74 together coordinate isopentenyl diphosphate. A [4Fe-4S] cluster-binding site is contributed by Cys96. His124 serves as a coordination point for (2E)-4-hydroxy-3-methylbut-2-enyl diphosphate. Residue His124 participates in dimethylallyl diphosphate binding. Residue His124 coordinates isopentenyl diphosphate. The Proton donor role is filled by Glu126. Position 167 (Thr167) interacts with (2E)-4-hydroxy-3-methylbut-2-enyl diphosphate. Cys197 lines the [4Fe-4S] cluster pocket. The (2E)-4-hydroxy-3-methylbut-2-enyl diphosphate site is built by Ser225, Ser226, Asn227, and Ser269. Residues Ser225, Ser226, Asn227, and Ser269 each contribute to the dimethylallyl diphosphate site. Positions 225, 226, 227, and 269 each coordinate isopentenyl diphosphate.

It belongs to the IspH family. In terms of assembly, homodimer. Requires [4Fe-4S] cluster as cofactor.

The enzyme catalyses isopentenyl diphosphate + 2 oxidized [2Fe-2S]-[ferredoxin] + H2O = (2E)-4-hydroxy-3-methylbut-2-enyl diphosphate + 2 reduced [2Fe-2S]-[ferredoxin] + 2 H(+). It carries out the reaction dimethylallyl diphosphate + 2 oxidized [2Fe-2S]-[ferredoxin] + H2O = (2E)-4-hydroxy-3-methylbut-2-enyl diphosphate + 2 reduced [2Fe-2S]-[ferredoxin] + 2 H(+). The protein operates within isoprenoid biosynthesis; dimethylallyl diphosphate biosynthesis; dimethylallyl diphosphate from (2E)-4-hydroxy-3-methylbutenyl diphosphate: step 1/1. It participates in isoprenoid biosynthesis; isopentenyl diphosphate biosynthesis via DXP pathway; isopentenyl diphosphate from 1-deoxy-D-xylulose 5-phosphate: step 6/6. Catalyzes the conversion of 1-hydroxy-2-methyl-2-(E)-butenyl 4-diphosphate (HMBPP) into a mixture of isopentenyl diphosphate (IPP) and dimethylallyl diphosphate (DMAPP). Acts in the terminal step of the DOXP/MEP pathway for isoprenoid precursor biosynthesis. The chain is 4-hydroxy-3-methylbut-2-enyl diphosphate reductase from Salmonella paratyphi C (strain RKS4594).